The primary structure comprises 295 residues: Probable phosphoglycerate mutase PMU1 (295 aa).

His61 (tele-phosphohistidine intermediate) is an active-site residue. Glu170 functions as the Proton donor/acceptor in the catalytic mechanism.

Belongs to the phosphoglycerate mutase family.

It localises to the cytoplasm. Its subcellular location is the nucleus. In terms of biological role, probable phosphomutase that may have a function related to the manipulation of phosphate groups on carbohydrates. Reduces trehalose-6-phosphate levels when overexpressed in TPS2-deleted cells. Reduces 5'-Phosphoribosyl-4-carboxamide-5-aminoimidazole (AICAR) levels, a metabolic intermediate at the crossroads between AMP and histidine biosynthesis pathways, when overexpressed in a ADE3-ADE16-ADE17 triple deletant. This is Probable phosphoglycerate mutase PMU1 from Saccharomyces cerevisiae (strain ATCC 204508 / S288c) (Baker's yeast).